A 253-amino-acid polypeptide reads, in one-letter code: Phosphate import ATP-binding protein PstB (253 aa).

An ABC transporter domain is found at 8–248; the sequence is IQVRDLDLFY…PRDKRTEDYI (241 aa). 40–47 contacts ATP; sequence GPSGCGKS.

Belongs to the ABC transporter superfamily. Phosphate importer (TC 3.A.1.7) family. As to quaternary structure, the complex is composed of two ATP-binding proteins (PstB), two transmembrane proteins (PstC and PstA) and a solute-binding protein (PstS).

The protein resides in the cell membrane. It catalyses the reaction phosphate(out) + ATP + H2O = ADP + 2 phosphate(in) + H(+). In terms of biological role, part of the ABC transporter complex PstSACB involved in phosphate import. Responsible for energy coupling to the transport system. This Clostridium perfringens (strain ATCC 13124 / DSM 756 / JCM 1290 / NCIMB 6125 / NCTC 8237 / Type A) protein is Phosphate import ATP-binding protein PstB.